A 120-amino-acid chain; its full sequence is uncharacterized protein (120 aa).

The helical transmembrane segment at 47 to 63 threads the bilayer; that stretch reads VSIVIGLCTVLISAGAG.

It is found in the membrane. This is an uncharacterized protein from Sinorhizobium fredii (strain NBRC 101917 / NGR234).